Here is a 189-residue protein sequence, read N- to C-terminus: Pyridoxal 5'-phosphate synthase subunit PdxT (189 aa).

46–48 (GES) provides a ligand contact to L-glutamine. The active-site Nucleophile is cysteine 78. Residues arginine 107 and 136 to 137 (IR) contribute to the L-glutamine site. Catalysis depends on charge relay system residues histidine 173 and glutamate 175.

It belongs to the glutaminase PdxT/SNO family. As to quaternary structure, in the presence of PdxS, forms a dodecamer of heterodimers. Only shows activity in the heterodimer.

It catalyses the reaction aldehydo-D-ribose 5-phosphate + D-glyceraldehyde 3-phosphate + L-glutamine = pyridoxal 5'-phosphate + L-glutamate + phosphate + 3 H2O + H(+). The catalysed reaction is L-glutamine + H2O = L-glutamate + NH4(+). The protein operates within cofactor biosynthesis; pyridoxal 5'-phosphate biosynthesis. Functionally, catalyzes the hydrolysis of glutamine to glutamate and ammonia as part of the biosynthesis of pyridoxal 5'-phosphate. The resulting ammonia molecule is channeled to the active site of PdxS. In Roseiflexus castenholzii (strain DSM 13941 / HLO8), this protein is Pyridoxal 5'-phosphate synthase subunit PdxT.